Reading from the N-terminus, the 153-residue chain is Sec-independent protein translocase protein TatB (153 aa).

Residues 1–21 (MFGISFSELLLVGLVALLVLG) traverse the membrane as a helical segment. The tract at residues 78–153 (MFAQNQHPET…HDSSLPPRAP (76 aa)) is disordered.

The protein belongs to the TatB family. The Tat system comprises two distinct complexes: a TatABC complex, containing multiple copies of TatA, TatB and TatC subunits, and a separate TatA complex, containing only TatA subunits. Substrates initially bind to the TatABC complex, which probably triggers association of the separate TatA complex to form the active translocon.

Its subcellular location is the cell inner membrane. Functionally, part of the twin-arginine translocation (Tat) system that transports large folded proteins containing a characteristic twin-arginine motif in their signal peptide across membranes. Together with TatC, TatB is part of a receptor directly interacting with Tat signal peptides. TatB may form an oligomeric binding site that transiently accommodates folded Tat precursor proteins before their translocation. This Pseudomonas savastanoi pv. phaseolicola (strain 1448A / Race 6) (Pseudomonas syringae pv. phaseolicola (strain 1448A / Race 6)) protein is Sec-independent protein translocase protein TatB.